Consider the following 37-residue polypeptide: Dolichyl-diphosphooligosaccharide--protein glycosyltransferase subunit 4B (37 aa).

Residues 1–8 (MFDDQDLG) are Lumenal-facing. The helical transmembrane segment at 9 to 29 (FFANFLGIFIFVLVMAYHFVM) threads the bilayer. The Cytoplasmic portion of the chain corresponds to 30–37 (ADVKYEGN).

It belongs to the OST4 family. As to quaternary structure, component of the oligosaccharyltransferase (OST) complex.

It localises to the endoplasmic reticulum membrane. Its function is as follows. Subunit of the oligosaccharyl transferase (OST) complex that catalyzes the initial transfer of a defined glycan (Glc(3)Man(9)GlcNAc(2) in eukaryotes) from the lipid carrier dolichol-pyrophosphate to an asparagine residue within an Asn-X-Ser/Thr consensus motif in nascent polypeptide chains, the first step in protein N-glycosylation. N-glycosylation occurs cotranslationally and the complex associates with the Sec61 complex at the channel-forming translocon complex that mediates protein translocation across the endoplasmic reticulum (ER). All subunits are required for a maximal enzyme activity. This is Dolichyl-diphosphooligosaccharide--protein glycosyltransferase subunit 4B (OST4B) from Oryza sativa subsp. japonica (Rice).